A 431-amino-acid chain; its full sequence is Adenylosuccinate synthetase (431 aa).

GTP-binding positions include 12 to 18 (GDEGKGK) and 40 to 42 (GHT). The active-site Proton acceptor is the aspartate 13. Mg(2+) contacts are provided by aspartate 13 and glycine 40. IMP is bound by residues 13–16 (DEGK), 38–41 (NAGH), threonine 131, arginine 145, glutamine 225, threonine 240, and arginine 304. Catalysis depends on histidine 41, which acts as the Proton donor. Residue 300–306 (TVTGRKR) coordinates substrate. Residues arginine 306, 332–334 (KLD), and 414–416 (STS) each bind GTP.

It belongs to the adenylosuccinate synthetase family. In terms of assembly, homodimer. The cofactor is Mg(2+).

The protein resides in the cytoplasm. It carries out the reaction IMP + L-aspartate + GTP = N(6)-(1,2-dicarboxyethyl)-AMP + GDP + phosphate + 2 H(+). It participates in purine metabolism; AMP biosynthesis via de novo pathway; AMP from IMP: step 1/2. In terms of biological role, plays an important role in the de novo pathway of purine nucleotide biosynthesis. Catalyzes the first committed step in the biosynthesis of AMP from IMP. The chain is Adenylosuccinate synthetase from Roseobacter denitrificans (strain ATCC 33942 / OCh 114) (Erythrobacter sp. (strain OCh 114)).